The primary structure comprises 380 residues: UPF0754 membrane protein Bsph_0374 (380 aa).

Transmembrane regions (helical) follow at residues 1 to 21 (MDNF…IGGV) and 357 to 377 (MITV…GLIV).

Belongs to the UPF0754 family.

The protein localises to the cell membrane. This is UPF0754 membrane protein Bsph_0374 from Lysinibacillus sphaericus (strain C3-41).